Consider the following 260-residue polypeptide: Flap endonuclease Xni (260 aa).

Asp-104 contacts Mg(2+). The 91-residue stretch at 160–250 (VSPQQLTDYW…NGNLQQLRLP (91 aa)) folds into the 5'-3' exonuclease domain. Residues Leu-171, Ala-172, Pro-180, Val-182, and Ile-185 each contribute to the K(+) site. Residues 184–189 (GIGPKS) are interaction with DNA.

The protein belongs to the Xni family. It depends on Mg(2+) as a cofactor. K(+) serves as cofactor.

Has flap endonuclease activity. During DNA replication, flap endonucleases cleave the 5'-overhanging flap structure that is generated by displacement synthesis when DNA polymerase encounters the 5'-end of a downstream Okazaki fragment. The chain is Flap endonuclease Xni from Pectobacterium atrosepticum (strain SCRI 1043 / ATCC BAA-672) (Erwinia carotovora subsp. atroseptica).